A 154-amino-acid polypeptide reads, in one-letter code: Transcriptional repressor NrdR (154 aa).

Residues Cys3 to Cys34 fold into a zinc finger. An ATP-cone domain is found at Pro49–Glu139.

Belongs to the NrdR family. Zn(2+) is required as a cofactor.

Functionally, negatively regulates transcription of bacterial ribonucleotide reductase nrd genes and operons by binding to NrdR-boxes. The sequence is that of Transcriptional repressor NrdR from Ralstonia pickettii (strain 12J).